We begin with the raw amino-acid sequence, 448 residues long: Phosphoglucosamine mutase (448 aa).

Residue Ser-100 is the Phosphoserine intermediate of the active site. Ser-100, Asp-240, Asp-242, and Asp-244 together coordinate Mg(2+). Residue Ser-100 is modified to Phosphoserine.

Belongs to the phosphohexose mutase family. Mg(2+) serves as cofactor. Post-translationally, activated by phosphorylation.

The catalysed reaction is alpha-D-glucosamine 1-phosphate = D-glucosamine 6-phosphate. In terms of biological role, catalyzes the conversion of glucosamine-6-phosphate to glucosamine-1-phosphate. The chain is Phosphoglucosamine mutase from Bacillus cereus (strain B4264).